Here is a 257-residue protein sequence, read N- to C-terminus: Snake venom serine protease KN11 (257 aa).

A signal peptide spans 1–18; the sequence is MVLIRVLANLLILQLSYA. Positions 19–24 are excised as a propeptide; sequence QKSSEL. A Peptidase S1 domain is found at 25–248; the sequence is VTGGHPCNIN…HLDWIKSIIA (224 aa). Cystine bridges form between C31-C162, C49-C65, C97-C255, C141-C209, C173-C188, and C199-C224. Active-site charge relay system residues include H64 and D109. N-linked (GlcNAc...) asparagine glycosylation is found at N120 and N121. The Charge relay system role is filled by S203.

The protein belongs to the peptidase S1 family. Snake venom subfamily. Monomer. In terms of tissue distribution, expressed by the venom gland.

The protein resides in the secreted. Its function is as follows. Snake venom serine protease that may act in the hemostasis system of the prey. The sequence is that of Snake venom serine protease KN11 from Trimeresurus stejnegeri (Chinese green tree viper).